A 243-amino-acid polypeptide reads, in one-letter code: Vesicle-associated membrane protein-associated protein B (243 aa).

An N-acetylalanine modification is found at alanine 2. Over 2-218 the chain is Cytoplasmic; that stretch reads AKVEQVLSLE…AALAATGKEE (217 aa). The region spanning 7-124 is the MSP domain; the sequence is VLSLEPQHEL…MDSKLRCVFE (118 aa). At serine 146 the chain carries Phosphoserine. Residue lysine 147 forms a Glycyl lysine isopeptide (Lys-Gly) (interchain with G-Cter in SUMO1) linkage. Phosphoserine is present on residues serine 156 and serine 159. A coiled-coil region spans residues 161-196; it reads LDDTEVKKVMEECRRLQGEVQRLREESRQLKEEDGL. A Phosphoserine modification is found at serine 206. Residues 219–239 form a helical; Anchor for type IV membrane protein membrane-spanning segment; it reads GLSARLLALVVLFFIVGVIIG.

Belongs to the VAMP-associated protein (VAP) (TC 9.B.17) family. In terms of assembly, homodimer, and heterodimer with VAPA. Interacts with VAMP1 and VAMP2. Interacts (via MSP domain) with ZFYVE27. Interacts with RMDN3. Interacts with KIF5A in a ZFYVE27-dependent manner. Interacts (via MSP domain) with STARD3 (via phospho-FFAT motif). Interacts with STARD3NL (via FFAT motif). Interacts with CERT1. Interacts with PLEKHA3 and SACM1L to form a ternary complex. Interacts with VPS13A (via FFAT motif). Interacts with RB1CC1 (via phosphorylated FFAT motif), MIGA2 (via phosphorylated FFAT motif), RMDN3 (via phosphorylated FFAT motif), OSBPL1A (via FFAT motif), KCNB1 (via phosphorylated FFAT motif) and KCNB2 (via phosphorylated FFAT motif). Interacts (via MSP domain) with WDR44 (via FFAT motif); the interactions connect the endoplasmic reticulum (ER) with the endosomal tubule.

It is found in the endoplasmic reticulum membrane. Functionally, endoplasmic reticulum (ER)-anchored protein that mediates the formation of contact sites between the ER and endosomes via interaction with FFAT motif-containing proteins such as STARD3 or WDR44. Interacts with STARD3 in a FFAT motif phosphorylation dependent manner. Via interaction with WDR44 participates in neosynthesized protein export. Participates in the endoplasmic reticulum unfolded protein response (UPR) by inducing ERN1/IRE1 activity. Involved in cellular calcium homeostasis regulation. In Mus musculus (Mouse), this protein is Vesicle-associated membrane protein-associated protein B.